Reading from the N-terminus, the 637-residue chain is Protein arginine N-methyltransferase 5 (637 aa).

Residue alanine 2 is modified to N-acetylalanine. The TIM barrel stretch occupies residues 13-292 (RVSSGRDLNC…YLEYLSQNRP (280 aa)). The SAM-dependent MTase PRMT-type domain maps to 308–615 (LQSPLQPLMD…SNSKKVWYEW (308 aa)). Tyrosine 324 lines the S-adenosyl-L-methionine pocket. Position 327 (phenylalanine 327) interacts with a protein. S-adenosyl-L-methionine is bound by residues 333-334 (KY), glutamate 392, and 419-420 (DM). Residues glutamate 435 and glutamate 444 each contribute to the a protein site. Active-site proton donor/acceptor residues include glutamate 435 and glutamate 444. The beta barrel stretch occupies residues 465-637 (PGEYTSFLAP…PTGRSYTIGL (173 aa)). Residues 488-494 (REKDRDP) form a dimerization region.

Belongs to the class I-like SAM-binding methyltransferase superfamily. Protein arginine N-methyltransferase family. As to quaternary structure, forms, at least, homodimers and homotetramers. Component of the methylosome complex, composed of PRMT5, WDR77 and CLNS1A. Found in a complex composed of PRMT5, WDR77 and RIOK1. RIOK1 and CLNS1A associate with PRMT5 in a mutually exclusive fashion, which allows the recruitment of distinct methylation substrates, such as nucleolin/NCL and Sm proteins, respectively. Interacts with PRDM1. Identified in a complex composed of methylosome and PRMT1 and ERH. Interacts with EGFR; methylates EGFR and stimulates EGFR-mediated ERK activation. Interacts with HOXA9. Interacts with SRGAP2. Found in a complex with COPRS, RUNX1 and CBFB. Interacts with CHTOP; the interaction symmetrically methylates CHTOP, but seems to require the presence of PRMT1. Interacts with EPB41L3; this modulates methylation of target proteins. Component of a high molecular weight E2F-pocket protein complex, CERC (cyclin E1 repressor complex). Associates with SWI/SNF remodeling complexes containing SMARCA2 and SMARCA4. Interacts with JAK2, SSTR1, SUPT5H, BRAF and with active RAF1. Interacts with LSM11, PRMT7 and SNRPD3. Interacts with COPRS; promoting its recruitment on histone H4. Interacts with CLNS1A/pICln. Identified in a complex with CLNS1A/pICln and Sm proteins. Interacts with RPS10. Interacts with WDR77. Interacts with IWS1. Interacts with CRY1. Interacts with POLR2A. Interacts with SMN1/SMN2. Interacts with LYAR; this interaction is direct. Interacts with TTC5/STRAP; this interaction is DNA damage-dependent and promotes PRMT5 interaction with p53/TP53. Interacts with p53/TP53 in response to DNA damage; the interaction is TTC5/STRAP dependent. Interacts with FAM47E; the interaction is direct, promotes PRMT5 localization to chromatin, and does not disrupt its association with WDR77 or STUB1. Interacts with TDRD6. Interacts with STUB1. Interacts with MBD2. Does not interact with MBD3.

It is found in the cytoplasm. The protein localises to the nucleus. Its subcellular location is the golgi apparatus. The enzyme catalyses L-arginyl-[protein] + 2 S-adenosyl-L-methionine = N(omega),N(omega)'-dimethyl-L-arginyl-[protein] + 2 S-adenosyl-L-homocysteine + 2 H(+). With respect to regulation, activity is increased by EGF, HGF, FGF1 or FGF2 treatments, and slightly decreased by NGF treatment. In terms of biological role, arginine methyltransferase that can both catalyze the formation of omega-N monomethylarginine (MMA) and symmetrical dimethylarginine (sDMA), with a preference for the formation of MMA. Specifically mediates the symmetrical dimethylation of arginine residues in the small nuclear ribonucleoproteins Sm D1 (SNRPD1) and Sm D3 (SNRPD3); such methylation being required for the assembly and biogenesis of snRNP core particles. Methylates SUPT5H and may regulate its transcriptional elongation properties. May methylate the N-terminal region of MBD2. Mono- and dimethylates arginine residues of myelin basic protein (MBP) in vitro. May play a role in cytokine-activated transduction pathways. Negatively regulates cyclin E1 promoter activity and cellular proliferation. Methylates histone H2A and H4 'Arg-3' during germ cell development. Methylates histone H3 'Arg-8', which may repress transcription. Methylates the Piwi proteins (PIWIL1, PIWIL2 and PIWIL4), methylation of Piwi proteins being required for the interaction with Tudor domain-containing proteins and subsequent localization to the meiotic nuage. Methylates RPS10. Attenuates EGF signaling through the MAPK1/MAPK3 pathway acting at 2 levels. First, monomethylates EGFR; this enhances EGFR 'Tyr-1197' phosphorylation and PTPN6 recruitment, eventually leading to reduced SOS1 phosphorylation. Second, methylates RAF1 and probably BRAF, hence destabilizing these 2 signaling proteins and reducing their catalytic activity. Required for induction of E-selectin and VCAM-1, on the endothelial cells surface at sites of inflammation. Methylates HOXA9. Methylates and regulates SRGAP2 which is involved in cell migration and differentiation. Acts as a transcriptional corepressor in CRY1-mediated repression of the core circadian component PER1 by regulating the H4R3 dimethylation at the PER1 promoter. Methylates GM130/GOLGA2, regulating Golgi ribbon formation. Methylates H4R3 in genes involved in glioblastomagenesis in a CHTOP- and/or TET1-dependent manner. Symmetrically methylates POLR2A, a modification that allows the recruitment to POLR2A of proteins including SMN1/SMN2 and SETX. This is required for resolving RNA-DNA hybrids created by RNA polymerase II, that form R-loop in transcription terminal regions, an important step in proper transcription termination. Along with LYAR, binds the promoter of gamma-globin HBG1/HBG2 and represses its expression. Symmetrically methylates NCL. Methylates p53/TP53; methylation might possibly affect p53/TP53 target gene specificity. Involved in spliceosome maturation and mRNA splicing in prophase I spermatocytes through the catalysis of the symmetrical arginine dimethylation of SNRPB (small nuclear ribonucleoprotein-associated protein) and the interaction with tudor domain-containing protein TDRD6. The protein is Protein arginine N-methyltransferase 5 (Prmt5) of Mus musculus (Mouse).